A 374-amino-acid polypeptide reads, in one-letter code: Peptidoglycan recognition protein 4 (374 aa).

A signal peptide spans 1 to 20; it reads MLSWLLVFSILVLLAQGVSS. 3 N-linked (GlcNAc...) asparagine glycosylation sites follow: asparagine 39, asparagine 93, and asparagine 146. N-acetylmuramoyl-L-alanine amidase domains follow at residues 76-212 and 233-359; these read RPVD…KACP and PAKY…LSPG. 3 disulfide bridges follow: cysteine 211/cysteine 333, cysteine 227/cysteine 271, and cysteine 247/cysteine 253. Tyrosine 275 serves as a coordination point for peptidoglycan. 2 interaction with murein regions span residues 294-303 and 354-355; these read QGSKTDSYND and NT.

Belongs to the N-acetylmuramoyl-L-alanine amidase 2 family. As to quaternary structure, homodimer; disulfide-linked. Heterodimer with PGLYRP3; disulfide-linked. As to expression, ubiquitous.

Its subcellular location is the secreted. Functionally, pattern receptor that binds to murein peptidoglycans (PGN) of Gram-positive bacteria. Has bactericidal activity towards Gram-positive bacteria. May kill Gram-positive bacteria by interfering with peptidoglycan biosynthesis. Also binds to Gram-negative bacteria, and has bacteriostatic activity towards Gram-negative bacteria. Plays a role in innate immunity. This chain is Peptidoglycan recognition protein 4 (Pglyrp4), found in Mus musculus (Mouse).